The sequence spans 240 residues: Ribosomal RNA small subunit methyltransferase G (240 aa).

S-adenosyl-L-methionine contacts are provided by residues G80, F85, 131–132 (AE), and R150.

It belongs to the methyltransferase superfamily. RNA methyltransferase RsmG family.

It is found in the cytoplasm. Specifically methylates the N7 position of a guanine in 16S rRNA. The sequence is that of Ribosomal RNA small subunit methyltransferase G from Dictyoglomus thermophilum (strain ATCC 35947 / DSM 3960 / H-6-12).